A 48-amino-acid chain; its full sequence is Osteocalcin (48 aa).

The Gla domain maps to 1 to 44; that stretch reads AGTAPADLTVAQLESLKEVCEANLACEHMMDVSGIIAAYTAYYG. Ca(2+) contacts are provided by Glu14, Glu18, Glu21, and Glu27. A 4-carboxyglutamate mark is found at Glu14, Glu18, and Glu21. Cys20 and Cys26 form a disulfide bridge.

It belongs to the osteocalcin/matrix Gla protein family. In terms of processing, gamma-carboxyglutamate residues are formed by vitamin K dependent carboxylation by GGCX. These residues are essential for the binding of calcium.

Its subcellular location is the secreted. It localises to the extracellular space. The protein localises to the extracellular matrix. In terms of biological role, the carboxylated form is one of the main organic components of the bone matrix, which constitutes 1-2% of the total bone protein. The carboxylated form binds strongly to apatite and calcium. The chain is Osteocalcin (bglap) from Cyprinus carpio (Common carp).